The primary structure comprises 368 residues: Propane 2-monooxygenase, hydroxylase component small subunit (368 aa).

It belongs to the TmoE/XamoE family. In terms of assembly, the propane 2-monooxygenase multicomponent enzyme system is composed of an electron transfer component and a monooxygenase component interacting with the effector protein MimD. The electron transfer component is composed of a reductase (MimB), and the monooxygenase component is formed by a large subunit (MimA) and a small subunit (MimC). Requires the presence of the chaperonin-like protein MimG to ensure a productive folding, resulting of a soluble MimC, which leads to the active form of MimABCD.

It catalyses the reaction propane + NADH + O2 + H(+) = propan-2-ol + NAD(+) + H2O. The catalysed reaction is acetone + NADH + O2 + H(+) = hydroxyacetone + NAD(+) + H2O. The enzyme catalyses butan-2-one + NADH + O2 + H(+) = 1-hydroxy-2-butanone + NAD(+) + H2O. It carries out the reaction phenol + NADH + O2 + H(+) = hydroquinone + NAD(+) + H2O. Component of the propane 2-monooxygenase multicomponent enzyme system which is involved in the degradation of propane via the O2-dependent hydroxylation of propane. Also involved in the degradation of acetone via the O2-dependent hydroxylation of acetone. Also able to catalyze the oxidation of phenol, methylethylketone (2-butanone), 1-propanol and 2-propanol. The polypeptide is Propane 2-monooxygenase, hydroxylase component small subunit (Mycolicibacterium goodii (Mycobacterium goodii)).